Consider the following 813-residue polypeptide: Molybdenum cofactor sulfurase (813 aa).

Lysine 228 carries the N6-(pyridoxal phosphate)lysine modification. Residue cysteine 391 is part of the active site. The interval 625 to 670 (PSLRHAKAHMQKHQGPKRSAAIEKSSAHSFHDPPTPPDSDSENRKR) is disordered. Residues 628 to 640 (RHAKAHMQKHQGP) are compositionally biased toward basic residues. An MOSC domain is found at 648–812 (KSSAHSFHDP…IKVGDKVSIG (165 aa)).

This sequence belongs to the class-V pyridoxal-phosphate-dependent aminotransferase family. MOCOS subfamily. Pyridoxal 5'-phosphate is required as a cofactor.

It carries out the reaction Mo-molybdopterin + L-cysteine + AH2 = thio-Mo-molybdopterin + L-alanine + A + H2O. Sulfurates the molybdenum cofactor. Sulfation of molybdenum is essential for xanthine dehydrogenase (XDH) and aldehyde oxidase (ADO) enzymes in which molybdenum cofactor is liganded by 1 oxygen and 1 sulfur atom in active form. In Botryotinia fuckeliana (strain B05.10) (Noble rot fungus), this protein is Molybdenum cofactor sulfurase.